The following is a 178-amino-acid chain: DELTA-miturgitoxin-Cp3a (178 aa).

The signal sequence occupies residues 1-18; sequence MKALYLLGLLAFLYSCSS. Residues 19 to 46 constitute a propeptide that is removed on maturation; the sequence is ENVYDLQPESSEEENPGTFLEAIQEQSR. The short motif at 43-46 is the Processing quadruplet motif element; that stretch reads EQSR. Disulfide bonds link Cys-48-Cys-63, Cys-55-Cys-72, Cys-62-Cys-86, Cys-74-Cys-84, Cys-113-Cys-128, Cys-120-Cys-137, Cys-127-Cys-155, and Cys-139-Cys-153.

Belongs to the spider toxin CSTX family. Double-CSTX subfamily. Post-translationally, cleavage of the propeptide depends on the processing quadruplet motif (XXXR, with at least one of X being E). In terms of tissue distribution, expressed by the venom gland.

It is found in the secreted. Functionally, spider venom toxin that exhibits cytolytic activity by forming an alpha-helix across the membrane. Lethal to insect larvae. This Cheiracanthium punctorium (Yellow sac spider) protein is DELTA-miturgitoxin-Cp3a.